The sequence spans 66 residues: MFTLKKSMLLLFFLGTINLSLCQEERDAEEERRDEDNAKMEEIKRGILGTVFKAGKGIVCGLTGLC.

An N-terminal signal peptide occupies residues 1 to 22 (MFTLKKSMLLLFFLGTINLSLC). Residues 23-43 (QEERDAEEERRDEDNAKMEEI) constitute a propeptide, removed in mature form. Cysteine 60 and cysteine 66 are oxidised to a cystine.

In terms of tissue distribution, expressed by the skin glands.

The protein resides in the secreted. Has antimicrobial activity against Gram-negative bacterium E.coli ATCC 8739 (MIC=50 ug), against Gram positive bacteria S.aureus ATCC 6538 (MIC=3.1 ug), methicillin-resistant S.aureus ATCC 43300 (MIC=12.5 ug), B.subtilis ATCC 6633 (MIC=12.5 ug) and against fungus C.albicans ATCC 90028 (MIC=50 ug). This chain is Nigrocin-2ISb, found in Odorrana ishikawae (Ishikawa's frog).